The primary structure comprises 197 residues: Rac-like GTP-binding protein 6 (197 aa).

Residue 13–20 (GDGAVGKT) coordinates GTP. Residues 35–43 (YVPTVFDNF) carry the Effector region motif. GTP-binding positions include 60 to 64 (DTAGQ) and 118 to 121 (TKLD). Residue cysteine 194 is modified to Cysteine methyl ester. The S-geranylgeranyl cysteine moiety is linked to residue cysteine 194. A propeptide spans 195 to 197 (SIL) (removed in mature form).

This sequence belongs to the small GTPase superfamily. Rho family.

It localises to the cytoplasm. The protein resides in the membrane. Inactive GDP-bound Rho GTPases reside in the cytosol, are found in a complex with Rho GDP-dissociation inhibitors (Rho GDIs), and are released from the GDI protein in order to translocate to membranes upon activation. The sequence is that of Rac-like GTP-binding protein 6 (RAC6) from Oryza sativa subsp. japonica (Rice).